The sequence spans 392 residues: 8-amino-7-oxononanoate synthase (392 aa).

Residue Arg19 coordinates substrate. Residue 106 to 107 (GY) coordinates pyridoxal 5'-phosphate. His131 lines the substrate pocket. Residues Ser176, His204, and Thr233 each coordinate pyridoxal 5'-phosphate. Residue Lys236 is modified to N6-(pyridoxal phosphate)lysine. Position 350 (Thr350) interacts with substrate.

The protein belongs to the class-II pyridoxal-phosphate-dependent aminotransferase family. BioF subfamily. In terms of assembly, homodimer. Requires pyridoxal 5'-phosphate as cofactor.

The catalysed reaction is 6-carboxyhexanoyl-[ACP] + L-alanine + H(+) = (8S)-8-amino-7-oxononanoate + holo-[ACP] + CO2. The protein operates within cofactor biosynthesis; biotin biosynthesis. Its function is as follows. Catalyzes the decarboxylative condensation of pimeloyl-[acyl-carrier protein] and L-alanine to produce 8-amino-7-oxononanoate (AON), [acyl-carrier protein], and carbon dioxide. The polypeptide is 8-amino-7-oxononanoate synthase (Stutzerimonas stutzeri (strain A1501) (Pseudomonas stutzeri)).